The chain runs to 205 residues: Small ribosomal subunit protein uS4 (205 aa).

Positions 20–46 (WGRSKSPVNRREYGPGQHGQRRKGKLS) are disordered. In terms of domain architecture, S4 RNA-binding spans 94–157 (RRLDAVVYRA…RQLTLVLEAS (64 aa)).

Belongs to the universal ribosomal protein uS4 family. As to quaternary structure, part of the 30S ribosomal subunit. Contacts protein S5. The interaction surface between S4 and S5 is involved in control of translational fidelity.

Functionally, one of the primary rRNA binding proteins, it binds directly to 16S rRNA where it nucleates assembly of the body of the 30S subunit. Its function is as follows. With S5 and S12 plays an important role in translational accuracy. In Beijerinckia indica subsp. indica (strain ATCC 9039 / DSM 1715 / NCIMB 8712), this protein is Small ribosomal subunit protein uS4.